Here is a 24-residue protein sequence, read N- to C-terminus: Coenzyme PQQ synthesis protein A (24 aa).

The pyrroloquinoline quinone (Glu-Tyr) cross-link spans E16 to Y20.

The protein belongs to the PqqA family.

It functions in the pathway cofactor biosynthesis; pyrroloquinoline quinone biosynthesis. Required for coenzyme pyrroloquinoline quinone (PQQ) biosynthesis. PQQ is probably formed by cross-linking a specific glutamate to a specific tyrosine residue and excising these residues from the peptide. This chain is Coenzyme PQQ synthesis protein A, found in Pseudomonas fluorescens (strain Pf0-1).